The following is a 46-amino-acid chain: Large ribosomal subunit protein bL36 (46 aa).

Belongs to the bacterial ribosomal protein bL36 family.

The sequence is that of Large ribosomal subunit protein bL36 from Klebsiella pneumoniae (strain 342).